A 358-amino-acid chain; its full sequence is Probable G-protein coupled receptor 25 (358 aa).

The Extracellular portion of the chain corresponds to 1–43 (MQSTEPWSPSWGTLSWDYSGSGSLDQVELCPAWNLPYGHAIIP). The helical transmembrane segment at 44-64 (ALYLAAFAVGLPGNAFVVWLL) threads the bilayer. The Cytoplasmic segment spans residues 65–76 (SRQRGPRRLVDT). A helical transmembrane segment spans residues 77-97 (FVLHLAAADLGFVLTLPLWAA). Topologically, residues 98–113 (AEARGGLWPFGDGLCK) are extracellular. Cysteines 112 and 191 form a disulfide. A helical transmembrane segment spans residues 114–134 (VSSFALAVTRCAGALLLAGMS). Residues 135 to 155 (VDRYLAVGRPLSARPLRSARC) are Cytoplasmic-facing. A helical membrane pass occupies residues 156-176 (VRAVCGAAWAAAFLAGLPALL). Topologically, residues 177-200 (YRGLQPSLDGVGSQCAEEPWEALQ) are extracellular. Residues 201 to 221 (GVGLLLLLLTFALPLAVTLIC) traverse the membrane as a helical segment. Residues 222 to 239 (YWRVSRRLPRVGRARSNS) lie on the Cytoplasmic side of the membrane. Residues 240–260 (LRIIFTVESVFVGCWLPFGVL) form a helical membrane-spanning segment. Over 261–284 (RSLFHLARLQALPLPCSLLLALRW) the chain is Extracellular. Residues 285-307 (GLTVTTCLAFVNSSANPVIYLLL) form a helical membrane-spanning segment. Residues 308–358 (DRSFRARARFGLCARAGRQVRRISSASSLSRDDSSVFRGRSPKVNSASATW) are Cytoplasmic-facing. The segment at 339-358 (DDSSVFRGRSPKVNSASATW) is disordered.

It belongs to the G-protein coupled receptor 1 family.

It is found in the membrane. Orphan receptor. This Mus musculus (Mouse) protein is Probable G-protein coupled receptor 25 (Gpr25).